Consider the following 300-residue polypeptide: MTAEPSSAPPEQPILRRIALSLQYEGSDFCGWQRQNNARSVQAVLETAIAQLDPLRPIQSFAAGRTDAGVHAAAQVVHFDCSGPIPAAKWAPALNGRLPASIRVRESVERPRDWHACYSAVYRRYRYIIHNGRRPNLFLTPWTWHRYHHRLNEENMRVALEGMIGLHDFAAFMRAGSRRPHSRTTIQDVLVEREGDLIRVEIQASGFLYGMVRLLMAQLVAVGEHRLSVKAFEQRWRDRRRDQVREAAPARGLCLLRAGYAEPIFSEAGWYDCQPWFSLATDDPPPDPPCFAKDEQQELQ.

Asp67 serves as the catalytic Nucleophile. Position 125 (Tyr125) interacts with substrate.

The protein belongs to the tRNA pseudouridine synthase TruA family. As to quaternary structure, homodimer.

The catalysed reaction is uridine(38/39/40) in tRNA = pseudouridine(38/39/40) in tRNA. In terms of biological role, formation of pseudouridine at positions 38, 39 and 40 in the anticodon stem and loop of transfer RNAs. This chain is tRNA pseudouridine synthase A, found in Synechococcus sp. (strain CC9902).